Consider the following 514-residue polypeptide: Maturase K (514 aa).

It belongs to the intron maturase 2 family. MatK subfamily.

The protein resides in the plastid. The protein localises to the chloroplast. Functionally, usually encoded in the trnK tRNA gene intron. Probably assists in splicing its own and other chloroplast group II introns. The sequence is that of Maturase K from Acer monspessulanum (Montpellier maple).